A 156-amino-acid chain; its full sequence is Ribosome maturation factor RimP (156 aa).

This sequence belongs to the RimP family.

The protein localises to the cytoplasm. Required for maturation of 30S ribosomal subunits. The chain is Ribosome maturation factor RimP from Dictyoglomus turgidum (strain DSM 6724 / Z-1310).